The chain runs to 262 residues: ATP synthase subunit a (262 aa).

The next 5 helical transmembrane spans lie at 26–46, 86–106, 130–150, 204–226, and 240–260; these read VHID…FVFS, VAPL…IDLI, DISA…FYTI, LIFI…GIPL, and LQAF…YNKA.

This sequence belongs to the ATPase A chain family. In terms of assembly, F-type ATPases have 2 components, CF(1) - the catalytic core - and CF(0) - the membrane proton channel. CF(1) has five subunits: alpha(3), beta(3), gamma(1), delta(1), epsilon(1). CF(0) has three main subunits: a(1), b(2) and c(9-12). The alpha and beta chains form an alternating ring which encloses part of the gamma chain. CF(1) is attached to CF(0) by a central stalk formed by the gamma and epsilon chains, while a peripheral stalk is formed by the delta and b chains.

Its subcellular location is the cell inner membrane. Functionally, key component of the proton channel; it plays a direct role in the translocation of protons across the membrane. This Haemophilus influenzae (strain 86-028NP) protein is ATP synthase subunit a.